The primary structure comprises 69 residues: Light-harvesting protein B-1015 alpha chain (69 aa).

The Cytoplasmic segment spans residues 2–20 (ATEYRTASWKLWLILDPRR). The chain crosses the membrane as a helical span at residues 21–41 (VLTALFVYLTVIALLIHFGLL). His37 is an a bacteriochlorophyll binding site. Over 42–59 (STDRLNWWEFQRGLPKAA) the chain is Periplasmic. The propeptide occupies 60 to 69 (SLVVVPPAVG).

It belongs to the antenna complex alpha subunit family. As to quaternary structure, the core complex is formed by different alpha and beta chains, binding bacteriochlorophyll molecules, and arranged most probably in tetrameric structures disposed around the reaction center. The non-pigmented gamma chains may constitute additional components.

It is found in the cell inner membrane. Its function is as follows. Antenna complexes are light-harvesting systems, which transfer the excitation energy to the reaction centers. This Blastochloris viridis (Rhodopseudomonas viridis) protein is Light-harvesting protein B-1015 alpha chain (pufA).